We begin with the raw amino-acid sequence, 431 residues long: Divergent protein kinase domain 1B (431 aa).

Over 1–30 (MRRLRRLAHLVLFCPFSKRLQGRLPGLRVR) the chain is Cytoplasmic. The May mediate ER retention signature appears at 5 to 6 (RR). A helical membrane pass occupies residues 31–51 (CIFLAWLGVFAGSWLVYVHYS). Residues 52-431 (SYSERCRGHV…WKKISNTKYS (380 aa)) lie on the Lumenal side of the membrane. Cystine bridges form between C57–C94 and C62–C117.

It belongs to the DIPK family. Post-translationally, among the many cysteines in the lumenal domain, most are probably involved in disulfide bonds.

It is found in the endoplasmic reticulum membrane. This is Divergent protein kinase domain 1B from Homo sapiens (Human).